Here is a 418-residue protein sequence, read N- to C-terminus: 1-deoxy-D-xylulose 5-phosphate reductoisomerase (418 aa).

NADPH contacts are provided by Thr32, Gly33, Ser34, Ile35, and Asn150. Lys151 lines the 1-deoxy-D-xylulose 5-phosphate pocket. Glu152 is an NADPH binding site. Residue Asp174 coordinates Mn(2+). 1-deoxy-D-xylulose 5-phosphate-binding residues include Ser175, Glu176, Ser200, and His223. Glu176 lines the Mn(2+) pocket. Residue Gly229 participates in NADPH binding. 1-deoxy-D-xylulose 5-phosphate is bound by residues Ser236, Asn241, Lys242, and Glu245. Glu245 contacts Mn(2+).

The protein belongs to the DXR family. It depends on Mg(2+) as a cofactor. Mn(2+) serves as cofactor.

The catalysed reaction is 2-C-methyl-D-erythritol 4-phosphate + NADP(+) = 1-deoxy-D-xylulose 5-phosphate + NADPH + H(+). The protein operates within isoprenoid biosynthesis; isopentenyl diphosphate biosynthesis via DXP pathway; isopentenyl diphosphate from 1-deoxy-D-xylulose 5-phosphate: step 1/6. Its function is as follows. Catalyzes the NADPH-dependent rearrangement and reduction of 1-deoxy-D-xylulose-5-phosphate (DXP) to 2-C-methyl-D-erythritol 4-phosphate (MEP). The chain is 1-deoxy-D-xylulose 5-phosphate reductoisomerase from Streptomyces coelicolor (strain ATCC BAA-471 / A3(2) / M145).